Reading from the N-terminus, the 1358-residue chain is DNA-directed RNA polymerase subunit beta (1358 aa).

It belongs to the RNA polymerase beta chain family. As to quaternary structure, the RNAP catalytic core consists of 2 alpha, 1 beta, 1 beta' and 1 omega subunit. When a sigma factor is associated with the core the holoenzyme is formed, which can initiate transcription.

It catalyses the reaction RNA(n) + a ribonucleoside 5'-triphosphate = RNA(n+1) + diphosphate. DNA-dependent RNA polymerase catalyzes the transcription of DNA into RNA using the four ribonucleoside triphosphates as substrates. In Francisella tularensis subsp. tularensis (strain FSC 198), this protein is DNA-directed RNA polymerase subunit beta.